A 588-amino-acid polypeptide reads, in one-letter code: MKLEFTEKNYNSFVLQNLNKQRKRKEYWDMALTVDHHVFFAHRNVLAAVSPLVKSLISSNDMKTTDELYITIDPNYLSPATVDQLLDYFYSGKVVISEQNVEELLRGAQYFNTPRLRIHCNDFLIKSIRRVNCLRYLFLAELFELKEVSDLAYSGIRDNFHFWASPEGSMHFMRCPPVIFGRLLRDENLHVLNEDQALSALISWVYFRKEEREKYFKKFFNYINLNAVSNKTLMFASNKLVGLENNSAHATLIESVLMDRKQERPCSLLSYQRKGALLDSVVILGGQKAHGKFNDGVFAYIIQENLWLKLSEMPYRAAALSATAAGRYIYISGGTTEQISGLKTAWRYDMDDNSWTKLPDLPIGLVFHTMVTCGGTVYSVGGSIAPRRYVSNIYRYDERKEAWCLAGKMSIPMDGTAVITKGDRNLYIVTGRCLVKGYISRVGVVDCFDTCTGEVVQCITFPIEFNHRPLLSFHQDNILRVHSHRQSVEINLQKIKANKSTTSVPLLPNSCPLDVSHAICSIGDSKVFVCGGVTTASDVQTKDYTINPNAYLLDQKIGEWQTLACPPEALDCPACCLAKLPCKILQRI.

The 71-residue stretch at 28 to 98 (WDMALTVDHH…FYSGKVVISE (71 aa)) folds into the BTB domain. Residues 133-235 (CLRYLFLAEL…NAVSNKTLMF (103 aa)) enclose the BACK domain. S149 bears the Phosphoserine mark. Kelch repeat units lie at residues 280–327 (SVVI…AAGR), 328–375 (YIYI…TCGG), 377–423 (VYSV…TKGD), 425–475 (NLYI…SFHQ), 476–525 (DNIL…IGDS), and 526–580 (KVFV…LAKL).

As to quaternary structure, interacts with CYLC1; the interaction may be relevant for proper acrosome attachment to the nuclear envelope. Expressed in testis and in spermatozoa.

It localises to the cytoplasm. The protein localises to the cytoskeleton. Its subcellular location is the perinuclear theca. It is found in the calyx. Its function is as follows. Required for both nuclear and acrosomal shaping during spermiogenesis. This Mus musculus (Mouse) protein is Calicin (Ccin).